A 344-amino-acid polypeptide reads, in one-letter code: tRNA N6-adenosine threonylcarbamoyltransferase (344 aa).

Residues His111 and His115 each contribute to the Fe cation site. Substrate is bound by residues 134-138 (LVSGG), Asp167, Gly180, and Asn273. Asp301 provides a ligand contact to Fe cation.

The protein belongs to the KAE1 / TsaD family. It depends on Fe(2+) as a cofactor.

The protein localises to the cytoplasm. It catalyses the reaction L-threonylcarbamoyladenylate + adenosine(37) in tRNA = N(6)-L-threonylcarbamoyladenosine(37) in tRNA + AMP + H(+). Its function is as follows. Required for the formation of a threonylcarbamoyl group on adenosine at position 37 (t(6)A37) in tRNAs that read codons beginning with adenine. Is involved in the transfer of the threonylcarbamoyl moiety of threonylcarbamoyl-AMP (TC-AMP) to the N6 group of A37, together with TsaE and TsaB. TsaD likely plays a direct catalytic role in this reaction. This chain is tRNA N6-adenosine threonylcarbamoyltransferase, found in Cupriavidus necator (strain ATCC 17699 / DSM 428 / KCTC 22496 / NCIMB 10442 / H16 / Stanier 337) (Ralstonia eutropha).